The sequence spans 360 residues: Phospho-N-acetylmuramoyl-pentapeptide-transferase (360 aa).

A run of 10 helical transmembrane segments spans residues Ala26–Ala46, Pro72–Tyr92, Ser94–Val114, Trp132–Gly152, Val168–Gly188, Gly199–Thr219, Ala236–Phe256, Val263–Leu283, Phe288–Val308, and Val338–Lys358.

It belongs to the glycosyltransferase 4 family. MraY subfamily. Mg(2+) serves as cofactor.

The protein resides in the cell inner membrane. It catalyses the reaction UDP-N-acetyl-alpha-D-muramoyl-L-alanyl-gamma-D-glutamyl-meso-2,6-diaminopimeloyl-D-alanyl-D-alanine + di-trans,octa-cis-undecaprenyl phosphate = di-trans,octa-cis-undecaprenyl diphospho-N-acetyl-alpha-D-muramoyl-L-alanyl-D-glutamyl-meso-2,6-diaminopimeloyl-D-alanyl-D-alanine + UMP. It functions in the pathway cell wall biogenesis; peptidoglycan biosynthesis. Its function is as follows. Catalyzes the initial step of the lipid cycle reactions in the biosynthesis of the cell wall peptidoglycan: transfers peptidoglycan precursor phospho-MurNAc-pentapeptide from UDP-MurNAc-pentapeptide onto the lipid carrier undecaprenyl phosphate, yielding undecaprenyl-pyrophosphoryl-MurNAc-pentapeptide, known as lipid I. The sequence is that of Phospho-N-acetylmuramoyl-pentapeptide-transferase from Klebsiella pneumoniae subsp. pneumoniae (strain ATCC 700721 / MGH 78578).